Here is a 270-residue protein sequence, read N- to C-terminus: MMNRIHAVILDWAGTTVDFGSFAPTQIFVEAFRQAFDVEITLAEARVPMGLGKWQHIEALGKLPAVDARWQAKFSRSMSAADIDAIYAAFMPLQIAKVVDFSSPIAGVIDTIAALRAEGIKIGSCSGYPRAVMERLVPAAAGHGYCPDHWVATDDLAAGGRPGPWMALQNVIALGIDAVAHCVKVDDAAPGISEGLNAGMWTVGLAVSGNEFGATWDAYQTMSKEDVAVRREHAASKLYAAGAHYVVDSLADLPEVIAHINARLAQGERL.

D11 acts as the Nucleophile in catalysis. Mg(2+) is bound by residues D11 and A13. K53 acts as the Schiff-base intermediate with substrate in catalysis. D187 is a binding site for Mg(2+).

The protein belongs to the HAD-like hydrolase superfamily. PhnX family. Homodimer. It depends on Mg(2+) as a cofactor.

The catalysed reaction is phosphonoacetaldehyde + H2O = acetaldehyde + phosphate + H(+). Involved in phosphonate degradation. This chain is Phosphonoacetaldehyde hydrolase, found in Salmonella choleraesuis (strain SC-B67).